We begin with the raw amino-acid sequence, 130 residues long: Large ribosomal subunit protein eL32 (130 aa).

Ser40 carries the post-translational modification Phosphoserine.

The protein belongs to the eukaryotic ribosomal protein eL32 family. Component of the large ribosomal subunit (LSU). Mature yeast ribosomes consist of a small (40S) and a large (60S) subunit. The 40S small subunit contains 1 molecule of ribosomal RNA (18S rRNA) and 33 different proteins (encoded by 57 genes). The large 60S subunit contains 3 rRNA molecules (25S, 5.8S and 5S rRNA) and 46 different proteins (encoded by 81 genes).

The protein resides in the cytoplasm. Functionally, component of the ribosome, a large ribonucleoprotein complex responsible for the synthesis of proteins in the cell. The small ribosomal subunit (SSU) binds messenger RNAs (mRNAs) and translates the encoded message by selecting cognate aminoacyl-transfer RNA (tRNA) molecules. The large subunit (LSU) contains the ribosomal catalytic site termed the peptidyl transferase center (PTC), which catalyzes the formation of peptide bonds, thereby polymerizing the amino acids delivered by tRNAs into a polypeptide chain. The nascent polypeptides leave the ribosome through a tunnel in the LSU and interact with protein factors that function in enzymatic processing, targeting, and the membrane insertion of nascent chains at the exit of the ribosomal tunnel. The polypeptide is Large ribosomal subunit protein eL32 (Saccharomyces cerevisiae (strain ATCC 204508 / S288c) (Baker's yeast)).